We begin with the raw amino-acid sequence, 160 residues long: Transcription antitermination protein NusB (160 aa).

Belongs to the NusB family.

Its function is as follows. Involved in transcription antitermination. Required for transcription of ribosomal RNA (rRNA) genes. Binds specifically to the boxA antiterminator sequence of the ribosomal RNA (rrn) operons. The polypeptide is Transcription antitermination protein NusB (Sinorhizobium medicae (strain WSM419) (Ensifer medicae)).